Reading from the N-terminus, the 592-residue chain is Vacuolin-B (592 aa).

The span at 1–30 (MIESSSFMKKTSSENSIGSRSNIHEASTFS) shows a compositional bias: polar residues. The segment at 1 to 35 (MIESSSFMKKTSSENSIGSRSNIHEASTFSSEHEN) is disordered. Residues 480–534 (KTTEARLKAETDNIALEQKGKAIIAEAQAKLESAQKQAQALLITAEAQKKVQEMQ) are a coiled coil. An oligomerization domain region spans residues 491–555 (DNIALEQKGK…EIELAKIKSE (65 aa)).

This sequence belongs to the vacuolin family. As to quaternary structure, homotrimer.

It is found in the endosome membrane. Its subcellular location is the lysosome membrane. In terms of biological role, negative regulator of late steps of the endocytic pathway. In Dictyostelium discoideum (Social amoeba), this protein is Vacuolin-B (vacB).